The following is a 162-amino-acid chain: Phospholipase A and acyltransferase 3 (162 aa).

Over Met1 to Val133 the chain is Cytoplasmic. The LRAT domain maps to Leu13–Gln129. Catalysis depends on residues His23 and His35. Residue Cys113 is the Acyl-thioester intermediate of the active site. The helical transmembrane segment at Ile134–Phe154 threads the bilayer. Residues Ser155–Gln162 lie on the Lumenal side of the membrane.

Belongs to the H-rev107 family. Interacts with PPP2R1A; this interaction might decrease PP2A activity. As to expression, widely expressed. Low expression, if any, in hematopoietic cells and thymus. In testis, confined to round spermatids. Expressed in normal ovarian epithelial cells. Down-regulated in some ovarian carcinomas and testicular germ cell tumors. Highly expressed in white adipose tissue.

The protein localises to the cell membrane. It localises to the cytoplasm. The protein resides in the cytosol. It is found in the perinuclear region. Its subcellular location is the peroxisome membrane. The protein localises to the mitochondrion membrane. It localises to the nucleus envelope. The protein resides in the lysosome membrane. It is found in the endoplasmic reticulum membrane. It catalyses the reaction a 1,2-diacyl-sn-glycero-3-phosphocholine + H2O = a 1-acyl-sn-glycero-3-phosphocholine + a fatty acid + H(+). The enzyme catalyses a 1,2-diacyl-sn-glycero-3-phosphocholine + H2O = a 2-acyl-sn-glycero-3-phosphocholine + a fatty acid + H(+). It carries out the reaction 1,2-dihexadecanoyl-sn-glycero-3-phosphocholine + H2O = 1-hexadecanoyl-sn-glycero-3-phosphocholine + hexadecanoate + H(+). The catalysed reaction is 1,2-dihexadecanoyl-sn-glycero-3-phosphocholine + H2O = 2-hexadecanoyl-sn-glycero-3-phosphocholine + hexadecanoate + H(+). It catalyses the reaction 1-hexadecanoyl-2-(9Z-octadecenoyl)-sn-glycero-3-phosphocholine + H2O = 2-(9Z-octadecenoyl)-sn-glycero-3-phosphocholine + hexadecanoate + H(+). The enzyme catalyses 1-hexadecanoyl-2-(9Z-octadecenoyl)-sn-glycero-3-phosphocholine + H2O = 1-hexadecanoyl-sn-glycero-3-phosphocholine + (9Z)-octadecenoate + H(+). It carries out the reaction 1-hexadecanoyl-2-(5Z,8Z,11Z,14Z-eicosatetraenoyl)-sn-glycero-3-phosphocholine + H2O = 1-hexadecanoyl-sn-glycero-3-phosphocholine + (5Z,8Z,11Z,14Z)-eicosatetraenoate + H(+). The catalysed reaction is 1-hexadecanoyl-2-(5Z,8Z,11Z,14Z-eicosatetraenoyl)-sn-glycero-3-phosphocholine + H2O = 2-(5Z,8Z,11Z,14Z)-eicosatetraenoyl-sn-glycero-3-phosphocholine + hexadecanoate + H(+). It catalyses the reaction 1-hexadecanoyl-2-(9Z,12Z-octadecadienoyl)-sn-glycero-3-phosphoethanolamine + H2O = 1-hexadecanoyl-sn-glycero-3-phosphoethanolamine + (9Z,12Z)-octadecadienoate + H(+). The enzyme catalyses 1-hexadecanoyl-2-(9Z,12Z-octadecadienoyl)-sn-glycero-3-phosphoethanolamine + H2O = 2-(9Z,12Z)-octadecadienoyl-sn-glycero-3-phosphoethanolamine + hexadecanoate + H(+). It carries out the reaction 1-hexadecanoyl-2-(5Z,8Z,11Z,14Z-eicosatetraenoyl)-sn-glycero-3-phosphoethanolamine + H2O = 1-hexadecanoyl-sn-glycero-3-phosphoethanolamine + (5Z,8Z,11Z,14Z)-eicosatetraenoate + H(+). The catalysed reaction is 1-hexadecanoyl-2-(5Z,8Z,11Z,14Z-eicosatetraenoyl)-sn-glycero-3-phosphoethanolamine + H2O = 2-(5Z,8Z,11Z,14Z)-eicosatetraenoyl-sn-glycero-3-phosphoethanolamine + hexadecanoate + H(+). It catalyses the reaction 1-hexanoyl-2-acyl-sn-glycero-3-phosphocholine + H2O = hexanoate + a 2-acyl-sn-glycero-3-phosphocholine + H(+). The enzyme catalyses 1-hexanoyl-2-acyl-sn-glycero-3-phosphocholine + H2O = 1-hexanoyl-sn-glycero-3-phosphocholine + a fatty acid + H(+). It carries out the reaction 1,2-diheptadecanoyl-sn-glycero-3-phosphoethanolamine + 1-(9Z-octadecenoyl)-2-hexadecanoyl-sn-glycero-3-phosphocholine = 1,2-diheptadecanoyl-sn-glycero-3-phospho-N-hexadecanoyl-ethanolamine + 1-(9Z-octadecenoyl)-sn-glycero-3-phosphocholine + H(+). The catalysed reaction is 1,2-diheptadecanoyl-sn-glycero-3-phosphoethanolamine + 1-(9Z-octadecenoyl)-2-hexadecanoyl-sn-glycero-3-phosphocholine = 1,2-diheptadecanoyl-sn-glycero-3-phospho-N-(9Z-octadecenoyl)-ethanolamine + 2-hexadecanoyl-sn-glycero-3-phosphocholine + H(+). It catalyses the reaction 1,2-dihexanoyl-sn-glycero-3-phosphoethanolamine + 2-heptanoyl-sn-glycero-3-phosphocholine = hexanoyl-sn-glycero-3-phosphoethanolamine + 1-hexanoyl-2-heptanoyl-sn-glycero-3-phosphocholine. The enzyme catalyses 1-hexadecanoyl-2-octadecanoyl-sn-glycero-3-phosphocholine + H2O = octadecanoate + 1-hexadecanoyl-sn-glycero-3-phosphocholine + H(+). It carries out the reaction 1-hexadecanoyl-2-octadecanoyl-sn-glycero-3-phosphocholine + H2O = 2-octadecanoyl-sn-glycero-3-phosphocholine + hexadecanoate + H(+). The catalysed reaction is 1-octadecanoyl-2-hexadecanoyl-sn-glycero-3-phosphocholine + H2O = 1-octadecanoyl-sn-glycero-3-phosphocholine + hexadecanoate + H(+). It catalyses the reaction 1-octadecanoyl-2-hexadecanoyl-sn-glycero-3-phosphocholine + H2O = 2-hexadecanoyl-sn-glycero-3-phosphocholine + octadecanoate + H(+). The enzyme catalyses 1-hexadecanoyl-2-(9Z,12Z-octadecadienoyl)-sn-glycero-3-phosphocholine + H2O = (9Z,12Z)-octadecadienoate + 1-hexadecanoyl-sn-glycero-3-phosphocholine + H(+). It carries out the reaction 1-hexadecanoyl-2-(9Z,12Z-octadecadienoyl)-sn-glycero-3-phosphocholine + H2O = 2-(9Z,12Z-octadecadienoyl)-sn-glycero-3-phosphocholine + hexadecanoate + H(+). The catalysed reaction is 1,2-di-(9Z-octadecenoyl)-sn-glycero-3-phosphocholine + H2O = 2-(9Z-octadecenoyl)-sn-glycero-3-phosphocholine + (9Z)-octadecenoate + H(+). It catalyses the reaction 1,2-dihexadecanoyl-sn-glycero-3-phosphocholine + H2O = hexadecanoyl-sn-glycero-3-phosphocholine + hexadecanoate + H(+). The enzyme catalyses 1,2-di-(9Z-octadecenoyl)-sn-glycero-3-phosphocholine + H2O = 1-(9Z-octadecenoyl)-sn-glycero-3-phosphocholine + (9Z)-octadecenoate + H(+). It carries out the reaction 1,2-di-(9Z-octadecenoyl)-sn-glycero-3-phosphoethanolamine + 1,2-dihexadecanoyl-sn-glycero-3-phosphocholine = hexadecanoyl-sn-glycero-3-phosphocholine + N-hexadecanoyl-1,2-di-(9Z-octadecenoyl)-sn-glycero-3-phosphoethanolamine + H(+). The catalysed reaction is 1,2-di-(9Z,12Z-octadecadienoyl)-sn-glycero-3-phosphocholine + H2O = 1-(9Z,12Z)-octadecadienoyl-sn-glycero-3-phosphocholine + (9Z,12Z)-octadecadienoate + H(+). Its function is as follows. Exhibits both phospholipase A1/2 and acyltransferase activities. Shows phospholipase A1 (PLA1) and A2 (PLA2) activity, catalyzing the calcium-independent release of fatty acids from the sn-1 or sn-2 position of glycerophospholipids. For most substrates, PLA1 activity is much higher than PLA2 activity. Shows O-acyltransferase activity,catalyzing the transfer of a fatty acyl group from glycerophospholipid to the hydroxyl group of lysophospholipid. Shows N-acyltransferase activity, catalyzing the calcium-independent transfer of a fatty acyl group at the sn-1 position of phosphatidylcholine (PC) and other glycerophospholipids to the primary amine of phosphatidylethanolamine (PE), forming N-acylphosphatidylethanolamine (NAPE), which serves as precursor for N-acylethanolamines (NAEs). Exhibits high N-acyltransferase activity and low phospholipase A1/2 activity. Required for complete organelle rupture and degradation that occur during eye lens terminal differentiation, when fiber cells that compose the lens degrade all membrane-bound organelles in order to provide lens with transparency to allow the passage of light. Organelle membrane degradation is probably catalyzed by the phospholipase activity. In terms of biological role, (Microbial infection) Acts as a host factor for picornaviruses: required during early infection to promote viral genome release into the cytoplasm. May act as a cellular sensor of membrane damage at sites of virus entry, which relocalizes to sites of membrane rupture upon virus unfection. Facilitates safe passage of the RNA away from LGALS8, enabling viral genome translation by host ribosome. May also be involved in initiating pore formation, increasing pore size or in maintaining pores for genome delivery. The lipid-modifying enzyme activity is required for this process. This Homo sapiens (Human) protein is Phospholipase A and acyltransferase 3.